The following is a 451-amino-acid chain: MPFIPHTETDIQDMLAAIGVNDIEQLFDEIPSALRTGPLNLVPEAMSEMEITRLMHRRAAQDHVDLNFIGAGAYEHHIPAAVWQIATRGEFYSAYTPYQAEASQGTLQLVYEYQTMMTGLTGMDVSNASLYDGASALAEAVLMSVRANRKSKSHRVLMPATVNPVYRSVTRAIVHGQGIELVEVPFDPATGRVDPKSLAAFEGQDITALVIPQPNFFGVLEEADALTDWAHAQDAQVIGVVNPVSLALLKPPGEWGGKGADIVCGEGQPLGAPLSSGGPYFGFMCCRKEHVRQMPGRIVGRTLDADGRTGFVLTLQAREQHIRRSKATSNICTNQGLVVTAATIHMALLGPEGLERVAAACHANTHALIERLKPLGVTPAFAGEAFHEIAFRLPRPVRPVLDAMAQQGVLGGYALGDDYSDLGDLLLVCATETKTEADLDRYAEVMKAALA.

This sequence belongs to the GcvP family. N-terminal subunit subfamily. As to quaternary structure, the glycine cleavage system is composed of four proteins: P, T, L and H. In this organism, the P 'protein' is a heterodimer of two subunits.

The catalysed reaction is N(6)-[(R)-lipoyl]-L-lysyl-[glycine-cleavage complex H protein] + glycine + H(+) = N(6)-[(R)-S(8)-aminomethyldihydrolipoyl]-L-lysyl-[glycine-cleavage complex H protein] + CO2. Its function is as follows. The glycine cleavage system catalyzes the degradation of glycine. The P protein binds the alpha-amino group of glycine through its pyridoxal phosphate cofactor; CO(2) is released and the remaining methylamine moiety is then transferred to the lipoamide cofactor of the H protein. The protein is Probable glycine dehydrogenase (decarboxylating) subunit 1 of Thioalkalivibrio sulfidiphilus (strain HL-EbGR7).